Consider the following 78-residue polypeptide: Putative membrane protein insertion efficiency factor (78 aa).

Belongs to the UPF0161 family.

The protein resides in the cell inner membrane. Functionally, could be involved in insertion of integral membrane proteins into the membrane. The sequence is that of Putative membrane protein insertion efficiency factor from Roseobacter denitrificans (strain ATCC 33942 / OCh 114) (Erythrobacter sp. (strain OCh 114)).